Reading from the N-terminus, the 456-residue chain is CCA-adding enzyme (456 aa).

ATP is bound by residues serine 53 and lysine 56. The CTP site is built by serine 53 and lysine 56. Positions 65, 67, and 119 each coordinate Mg(2+). Histidine 142, lysine 161, and tyrosine 170 together coordinate ATP. Positions 142, 161, and 170 each coordinate CTP.

Belongs to the tRNA nucleotidyltransferase/poly(A) polymerase family. Archaeal CCA-adding enzyme subfamily. Homodimer. The cofactor is Mg(2+).

It carries out the reaction a tRNA precursor + 2 CTP + ATP = a tRNA with a 3' CCA end + 3 diphosphate. The enzyme catalyses a tRNA with a 3' CCA end + 2 CTP + ATP = a tRNA with a 3' CCACCA end + 3 diphosphate. Catalyzes the addition and repair of the essential 3'-terminal CCA sequence in tRNAs without using a nucleic acid template. Adds these three nucleotides in the order of C, C, and A to the tRNA nucleotide-73, using CTP and ATP as substrates and producing inorganic pyrophosphate. tRNA 3'-terminal CCA addition is required both for tRNA processing and repair. Also involved in tRNA surveillance by mediating tandem CCA addition to generate a CCACCA at the 3' terminus of unstable tRNAs. While stable tRNAs receive only 3'-terminal CCA, unstable tRNAs are marked with CCACCA and rapidly degraded. The polypeptide is CCA-adding enzyme (Thermococcus kodakarensis (strain ATCC BAA-918 / JCM 12380 / KOD1) (Pyrococcus kodakaraensis (strain KOD1))).